We begin with the raw amino-acid sequence, 337 residues long: DNA-directed RNA polymerase subunit alpha (337 aa).

Residues 1 to 233 (MVREEVAVST…DLFIPFLHAE (233 aa)) are alpha N-terminal domain (alpha-NTD). Residues 266–337 (GIALKCIFID…FTIDLPKNKF (72 aa)) are alpha C-terminal domain (alpha-CTD).

This sequence belongs to the RNA polymerase alpha chain family. In terms of assembly, in plastids the minimal PEP RNA polymerase catalytic core is composed of four subunits: alpha, beta, beta', and beta''. When a (nuclear-encoded) sigma factor is associated with the core the holoenzyme is formed, which can initiate transcription.

It localises to the plastid. It is found in the chloroplast. The catalysed reaction is RNA(n) + a ribonucleoside 5'-triphosphate = RNA(n+1) + diphosphate. Its function is as follows. DNA-dependent RNA polymerase catalyzes the transcription of DNA into RNA using the four ribonucleoside triphosphates as substrates. In Liriodendron tulipifera (Tuliptree), this protein is DNA-directed RNA polymerase subunit alpha.